Consider the following 838-residue polypeptide: MSSPSIAPVTPDLVRLRATARDKDDAIAQAAQLLVAAGCVAPGYDASMRRREGLANTFLGHGLAIPHGVGEDRHLVRRDGIAVLQLPEGVEWNPGQTTRLVVGIAAQSDTHITLLRRLTRLIQDPAQLEALFTTDDPAVIVAALTGDRAPDTSAAPATDLAERFEWTIAYPSGLHARPATRWAETARGFSARAQVRAGDQAADAKSLVGLLQLGLRAGDSITVSAKGSDAPALLKRLRAVMDSLTAQEKADAERAAQRRAAPVIGWTPPQAQPAIVGIGASPGVAIGIVHRLRAAQTEVADQPIGLGDGGVLLHDALTRTRQQLAAIQDDTQRRLGASDAAIFKAQAELLNDTDLITRTCQLMVEGHGVAWSWHQAVEQIASGLAALGNPVLAGRAADLRDVGRRVLAQLDPAAAGAGLTDLPEQPCILLAGDLSPSDTANLDTDCVLGLATAQGGPTSHTAILSRTLGLPALVAAGGQLLDIEDGVTAIIDGSSGRLYINPSELDLDAARTHIAEQQAIREREAAQRALPAETTDGHHIDIGANVNLPEQVAMALTQGAEGVGLMRTEFLFLERGSTPTEDEQYQTYLAMARALDGRPLIVRALDIGGDKQVAHLELPHEENPFLGVRGARLLLRRPDLLEPQLRALYRAAKDGARLSIMFPMITSVPELISLREICARIRAELDAPELPIGIMIEVPAAAAQADVLARHADFFSIGTNDLTQYVLAIDRQNPELAAEADSLHPAVLRMIRSTIDGARKHDRWVGVCGGLAGDPFGASLLAGLGVQELSMTPNDIPAVKARLRGRALSALQQLAEQALQCETAEQVRALEAQREGQA.

Residues 7 to 147 (APVTPDLVRL…AVIVAALTGD (141 aa)) form the PTS EIIA type-2 domain. His67 (tele-phosphohistidine intermediate; for EIIA activity) is an active-site residue. Residue His67 is modified to Phosphohistidine; by HPr. Residues 161 to 253 (AERFEWTIAY…LTAQEKADAE (93 aa)) form the HPr domain. The active-site Pros-phosphohistidine intermediate; for HPr activity is His175. His175 bears the Phosphohistidine; by EI mark. Residues 274 to 838 (AIVGIGASPG…ALEAQREGQA (565 aa)) form a PTS EI region. The active-site Tele-phosphohistidine intermediate; for PTS EI activity is His460. At His460 the chain carries Phosphohistidine; by autocatalysis. Phosphoenolpyruvate is bound by residues Arg567 and Arg603. Positions 697 and 721 each coordinate Mg(2+). Phosphoenolpyruvate is bound by residues 720–721 (ND) and Arg731. The active-site Proton donor is Cys768.

It belongs to the PEP-utilizing enzyme family. Mg(2+) is required as a cofactor.

It localises to the cytoplasm. The catalysed reaction is L-histidyl-[protein] + phosphoenolpyruvate = N(pros)-phospho-L-histidyl-[protein] + pyruvate. The phosphoenolpyruvate-dependent sugar phosphotransferase system (sugar PTS), a major carbohydrate active transport system, catalyzes the phosphorylation of incoming sugar substrates concomitantly with their translocation across the cell membrane. The enzyme II FruAB PTS system is involved in fructose transport. This chain is Multiphosphoryl transfer protein, found in Xanthomonas campestris pv. campestris (strain ATCC 33913 / DSM 3586 / NCPPB 528 / LMG 568 / P 25).